A 273-amino-acid chain; its full sequence is Dermonecrotic toxin LspaSicTox-alphaIA2iv (273 aa).

Histidine 5 is an active-site residue. Positions 25 and 27 each coordinate Mg(2+). Catalysis depends on histidine 41, which acts as the Nucleophile. 2 disulfide bridges follow: cysteine 45–cysteine 51 and cysteine 47–cysteine 190. Aspartate 85 contacts Mg(2+).

This sequence belongs to the arthropod phospholipase D family. Class II subfamily. It depends on Mg(2+) as a cofactor. Expressed by the venom gland.

It localises to the secreted. The catalysed reaction is an N-(acyl)-sphingosylphosphocholine = an N-(acyl)-sphingosyl-1,3-cyclic phosphate + choline. The enzyme catalyses an N-(acyl)-sphingosylphosphoethanolamine = an N-(acyl)-sphingosyl-1,3-cyclic phosphate + ethanolamine. It catalyses the reaction a 1-acyl-sn-glycero-3-phosphocholine = a 1-acyl-sn-glycero-2,3-cyclic phosphate + choline. It carries out the reaction a 1-acyl-sn-glycero-3-phosphoethanolamine = a 1-acyl-sn-glycero-2,3-cyclic phosphate + ethanolamine. Its function is as follows. Dermonecrotic toxins cleave the phosphodiester linkage between the phosphate and headgroup of certain phospholipids (sphingolipid and lysolipid substrates), forming an alcohol (often choline) and a cyclic phosphate. This toxin acts on sphingomyelin (SM). It may also act on ceramide phosphoethanolamine (CPE), lysophosphatidylcholine (LPC) and lysophosphatidylethanolamine (LPE), but not on lysophosphatidylserine (LPS), and lysophosphatidylglycerol (LPG). It acts by transphosphatidylation, releasing exclusively cyclic phosphate products as second products. Induces dermonecrosis, hemolysis, increased vascular permeability, edema, inflammatory response, and platelet aggregation. In Loxosceles spadicea (Recluse spider), this protein is Dermonecrotic toxin LspaSicTox-alphaIA2iv.